We begin with the raw amino-acid sequence, 450 residues long: UDP-N-acetylmuramoylalanine--D-glutamate ligase (450 aa).

119–125 lines the ATP pocket; the sequence is GTNGKTT.

Belongs to the MurCDEF family.

It is found in the cytoplasm. It catalyses the reaction UDP-N-acetyl-alpha-D-muramoyl-L-alanine + D-glutamate + ATP = UDP-N-acetyl-alpha-D-muramoyl-L-alanyl-D-glutamate + ADP + phosphate + H(+). It functions in the pathway cell wall biogenesis; peptidoglycan biosynthesis. Cell wall formation. Catalyzes the addition of glutamate to the nucleotide precursor UDP-N-acetylmuramoyl-L-alanine (UMA). In Lactococcus lactis subsp. lactis (strain IL1403) (Streptococcus lactis), this protein is UDP-N-acetylmuramoylalanine--D-glutamate ligase.